Reading from the N-terminus, the 297-residue chain is Formylmethanofuran--tetrahydromethanopterin formyltransferase-like protein (297 aa).

This sequence belongs to the FTR family.

The polypeptide is Formylmethanofuran--tetrahydromethanopterin formyltransferase-like protein (ehaS) (Methanothermobacter thermautotrophicus (strain ATCC 29096 / DSM 1053 / JCM 10044 / NBRC 100330 / Delta H) (Methanobacterium thermoautotrophicum)).